Consider the following 20-residue polypeptide: Cupiennin-6f (20 aa).

Expressed by the venom gland.

It is found in the secreted. This chain is Cupiennin-6f, found in Cupiennius salei (American wandering spider).